We begin with the raw amino-acid sequence, 190 residues long: Zinc finger C2H2 protein ECU03_0790 (190 aa).

4 C2H2-type zinc fingers span residues 4 to 27, 33 to 55, 85 to 108, and 119 to 142; these read RCCFEGCGKSFPRRAKLSDHLNTH, YKCDMCEKSYMKNGHLSVHKKKH, YKCGICGKRYRKRSWFDVHVESHH, and HVCEYCKFEFNKKSNLSTHVRSVH.

This chain is Zinc finger C2H2 protein ECU03_0790, found in Encephalitozoon cuniculi (strain GB-M1) (Microsporidian parasite).